Reading from the N-terminus, the 101-residue chain is Trp operon repressor homolog (101 aa).

Residues 59 to 82 mediate DNA binding; it reads QREIQQNLNTSAATITRGSNMLKL.

It belongs to the TrpR family. As to quaternary structure, homodimer.

The protein resides in the cytoplasm. This protein is an aporepressor. When complexed with L-tryptophan it binds the operator region of the trp operon and prevents the initiation of transcription. The sequence is that of Trp operon repressor homolog from Mannheimia succiniciproducens (strain KCTC 0769BP / MBEL55E).